A 124-amino-acid polypeptide reads, in one-letter code: MATINQLVRKPRAKQVVKSNVPALAACPQKRGVCTRVYTTTPKKPNSALRKVCRVRLTNGFEVTSYIGGEGHNLQEHSVVLIRGGRVKDLPGVRYHTVRGALDCAGVNDRKQARSKYGVKRPKS.

A 3-methylthioaspartic acid modification is found at Asp-89.

This sequence belongs to the universal ribosomal protein uS12 family. In terms of assembly, part of the 30S ribosomal subunit. Contacts proteins S8 and S17. May interact with IF1 in the 30S initiation complex.

With S4 and S5 plays an important role in translational accuracy. In terms of biological role, interacts with and stabilizes bases of the 16S rRNA that are involved in tRNA selection in the A site and with the mRNA backbone. Located at the interface of the 30S and 50S subunits, it traverses the body of the 30S subunit contacting proteins on the other side and probably holding the rRNA structure together. The combined cluster of proteins S8, S12 and S17 appears to hold together the shoulder and platform of the 30S subunit. The sequence is that of Small ribosomal subunit protein uS12 from Vibrio cholerae serotype O1 (strain ATCC 39315 / El Tor Inaba N16961).